The chain runs to 636 residues: Probable potassium transport system protein Kup (636 aa).

Transmembrane regions (helical) follow at residues 22 to 42 (VGLL…SPLY), 64 to 84 (ILSL…VMFI), 115 to 135 (LMVI…MITP), 150 to 170 (FDGI…ALFL), 182 to 202 (LFGP…VHGI), 220 to 240 (FFVV…LALT), 261 to 281 (WFIL…ALLL), 293 to 313 (LLAP…ATVI), 351 to 371 (IYIG…VIGF), 383 to 403 (VAVT…MLLL), 408 to 428 (PLLA…FFAA), and 433 to 453 (IAQG…LMST).

This sequence belongs to the HAK/KUP transporter (TC 2.A.72) family.

It localises to the cell inner membrane. It carries out the reaction K(+)(in) + H(+)(in) = K(+)(out) + H(+)(out). Its function is as follows. Transport of potassium into the cell. Likely operates as a K(+):H(+) symporter. This is Probable potassium transport system protein Kup from Pseudomonas putida (strain ATCC 47054 / DSM 6125 / CFBP 8728 / NCIMB 11950 / KT2440).